Consider the following 574-residue polypeptide: Multidrug and toxin extrusion protein 1 (574 aa).

Topologically, residues 1-51 (MEGQAAETNHRAETVVRAELCLSAEQGPETTAYSQKRCLFLPMEVWQEAQQ) are cytoplasmic. A helical membrane pass occupies residues 52–72 (LLALAAPAFLSQLMIFLISIV). Residues 73-86 (SSIFCGHLGKVELD) lie on the Extracellular side of the membrane. The helical transmembrane segment at 87-107 (AVSLAITIINITGVAVGTGLA) threads the bilayer. The Cytoplasmic segment spans residues 108–133 (GACDTLISQTFGGSNLKLVGIILQRG). The helical transmembrane segment at 134–154 (ILILLLFCFPCWALLINTESI) threads the bilayer. Residues 155–168 (LLLFRQDPEVSKLT) are Extracellular-facing. The chain crosses the membrane as a helical span at residues 169–189 (QIYVLIFLPALPAAFLYQLLA). Topologically, residues 190-204 (KYLQNQGIIYPQVLT) are cytoplasmic. A helical transmembrane segment spans residues 205–225 (GFIANIFNALFNYILLYVLGL). Topologically, residues 226–230 (GVMGS) are extracellular. Residues 231-251 (ACANTVSQFIQMILLFLYIVW) traverse the membrane as a helical segment. Residues 252–271 (RRLYADTWGGWSQACFEEWG) are Cytoplasmic-facing. Residues 272–291 (AFIRLAVASMLMLCIEWWAF) traverse the membrane as a helical segment. The Extracellular portion of the chain corresponds to 292–309 (EISMFLAGVLGMVDLAAQ). The helical transmembrane segment at 310–330 (AIIYQVAIVVYLIPLGLCIAG) threads the bilayer. Residues 331 to 350 (SIRVGHGLGAGNTEQAKRSA) are Cytoplasmic-facing. The chain crosses the membrane as a helical span at residues 351–371 (LVVLCMTELCALLSGILLATL). The Extracellular portion of the chain corresponds to 372–384 (KDVVAYIFTSDPN). A helical membrane pass occupies residues 385–405 (IVALVSYVLPVYSACLLFDAC). The Cytoplasmic segment spans residues 406–430 (VAACGGILRGSGKLKVGAISHTVGY). The helical transmembrane segment at 431-451 (YVIGLPLGISLMFAAKLGIIG) threads the bilayer. Residues 452–453 (FW) are Extracellular-facing. A helical transmembrane segment spans residues 454 to 472 (FGILACGIAQSIFLIIFVF). Residues 473–549 (KIDWKRASEE…AGAAQHTRTL (77 aa)) are Cytoplasmic-facing. Positions 500–541 (KPSVYQEGCPTEQGDVDPGNVESIEFSQSSTSSEGTSPTPAG) are disordered. The segment covering 521 to 538 (ESIEFSQSSTSSEGTSPT) has biased composition (low complexity). A helical transmembrane segment spans residues 550 to 570 (ILTRGLALGCAVGTLIIGIVI). Over 571-574 (RLSV) the chain is Extracellular.

This sequence belongs to the multi antimicrobial extrusion (MATE) (TC 2.A.66.1) family.

The protein localises to the cell membrane. It is found in the apical cell membrane. It carries out the reaction thiamine(out) + H(+)(in) = thiamine(in) + H(+)(out). The enzyme catalyses estrone 3-sulfate(in) + H(+)(out) = estrone 3-sulfate(out) + H(+)(in). The catalysed reaction is creatinine(in) + H(+)(out) = creatinine(out) + H(+)(in). It catalyses the reaction agmatine(in) + H(+)(out) = agmatine(out) + H(+)(in). Multidrug efflux pump that functions as a H(+)/organic cation antiporter. Mediates the secretion of cationic compounds including drugs, toxins and endogenous metabolites. Plays a role physiological role in the excretion of drugs, toxins and endogenous metabolites through the kidney and liver, into urine and bile respectively. This is Multidrug and toxin extrusion protein 1 (slc47a1) from Xenopus tropicalis (Western clawed frog).